Here is a 1022-residue protein sequence, read N- to C-terminus: Protein translocase subunit SECA1, chloroplastic (1022 aa).

Residues 1–72 constitute a chloroplast transit peptide; sequence MVSPLCDSQL…SRKRSTSVNA (72 aa). Position 73 is an N-acetylserine (Ser73). 176–183 serves as a coordination point for ATP; sequence MRTGEGKT. A disordered region spans residues 985–1022; it reads KDEEKKSQNGKPSKQVDNASEKPKQVGVTDEPSSIASA. Polar residues predominate over residues 993 to 1002; it reads NGKPSKQVDN.

The protein belongs to the SecA family. As to quaternary structure, part of the Sec protein translocation apparatus. Interacts probably with SCY1. As to expression, expressed in green tissues, including cotyledons, rosette and cauline leaves, and sepals. Also detected at the base and the tip of the trichome.

The protein resides in the plastid. It is found in the chloroplast stroma. It localises to the chloroplast thylakoid membrane. It carries out the reaction ATP + H2O + chloroplast-proteinSide 1 = ADP + phosphate + chloroplast-proteinSide 2.. Its function is as follows. Has a central role in coupling the hydrolysis of ATP to the transfer of proteins across the thylakoid membrane. Involved in photosynthetic acclimation and required for chloroplast biogenesis. The sequence is that of Protein translocase subunit SECA1, chloroplastic from Arabidopsis thaliana (Mouse-ear cress).